Here is an 86-residue protein sequence, read N- to C-terminus: MSWALKTTDMFLDSSRCTHRTYGDVCAEIHKREREDREAARTAVTDPELPLLCPPDVRSDPASRNPTQQTRGCARSNERQDRVLAP.

The tract at residues 2 to 35 is active domain; the sequence is SWALKTTDMFLDSSRCTHRTYGDVCAEIHKRERE. The interval 33–86 is disordered; that stretch reads EREDREAARTAVTDPELPLLCPPDVRSDPASRNPTQQTRGCARSNERQDRVLAP. A compositionally biased stretch (polar residues) spans 62 to 71; it reads ASRNPTQQTR. Residues 76-86 show a composition bias toward basic and acidic residues; the sequence is SNERQDRVLAP.

Belongs to the herpesviridae US12 family. Interacts with host TAP1 and TAP2; these interactions inhibit the loading of peptides onto MHC class I molecules.

It is found in the host cytoplasm. It localises to the host nucleus. Functionally, plays a role in the inhibition of host immune response. Binds specifically to transporters associated with antigen processing (TAP), thereby blocking peptide-binding and translocation by TAP as well as subsequent loading of peptides onto MHC class I molecules. Empty MHC I molecules are retained in the endoplasmic reticulum and ultimately directed to proteasomal degradation. In consequence, infected cells are masked for immune recognition by cytotoxic T-lymphocytes. The chain is ICP47 protein (US12) from Human herpesvirus 2 (strain HG52) (HHV-2).